A 177-amino-acid polypeptide reads, in one-letter code: O-acetyl-ADP-ribose deacetylase (177 aa).

Positions 1–175 (MNSRIHVIHG…LYQRLLTQQG (175 aa)) constitute a Macro domain. Residues 11–12 (DI), Asn25, 33–35 (GVD), and 122–126 (STGVY) contribute to the substrate site. Asp35 functions as the Proton acceptor in the catalytic mechanism.

It belongs to the MacroD-type family. YmdB subfamily. Homodimer. Interacts with RNase III.

The enzyme catalyses 3''-O-acetyl-ADP-D-ribose + H2O = ADP-D-ribose + acetate + H(+). It carries out the reaction 2''-O-acetyl-ADP-D-ribose + H2O = ADP-D-ribose + acetate + H(+). Functionally, deacetylates O-acetyl-ADP ribose to yield ADP-ribose and free acetate. Down-regulates ribonuclease 3 (RNase III) activity. Acts by interacting directly with the region of the ribonuclease that is required for dimerization/activation. This Citrobacter rodentium (strain ICC168) (Citrobacter freundii biotype 4280) protein is O-acetyl-ADP-ribose deacetylase.